Here is a 620-residue protein sequence, read N- to C-terminus: Rpb7-binding protein seb1 (620 aa).

The CID domain maps to 1-151 (MSGIAEFDGI…SLRSKLKDAM (151 aa)). Disordered stretches follow at residues 151 to 191 (MAST…RPVE) and 327 to 398 (SVPL…TIPP). Serine 343 is modified (phosphoserine). The span at 361–374 (PSPSHLSIPSTLPP) shows a compositional bias: low complexity. Positions 406 to 478 (RTLFLGGITR…TTIRTKWGVG (73 aa)) constitute an RRM domain. The disordered stretch occupies residues 558–620 (RGRKPYRGGP…YVSQPPWQPQ (63 aa)). Residues 570–580 (HHGERHFDSGN) are compositionally biased toward basic and acidic residues.

Interacts with rpb7.

Its subcellular location is the nucleus. Involved in the processing of pol II transcripts. In Schizosaccharomyces pombe (strain 972 / ATCC 24843) (Fission yeast), this protein is Rpb7-binding protein seb1 (seb1).